We begin with the raw amino-acid sequence, 344 residues long: Phosphate acyltransferase (344 aa).

The protein belongs to the PlsX family. As to quaternary structure, homodimer. Probably interacts with PlsY.

The protein localises to the cytoplasm. It catalyses the reaction a fatty acyl-[ACP] + phosphate = an acyl phosphate + holo-[ACP]. It functions in the pathway lipid metabolism; phospholipid metabolism. Its function is as follows. Catalyzes the reversible formation of acyl-phosphate (acyl-PO(4)) from acyl-[acyl-carrier-protein] (acyl-ACP). This enzyme utilizes acyl-ACP as fatty acyl donor, but not acyl-CoA. This chain is Phosphate acyltransferase, found in Yersinia pestis bv. Antiqua (strain Antiqua).